A 748-amino-acid polypeptide reads, in one-letter code: Catalase-peroxidase (748 aa).

Over residues 1–14 the composition is skewed to basic and acidic residues; that stretch reads MTDTSDARPPHSDA. The disordered stretch occupies residues 1–40; that stretch reads MTDTSDARPPHSDAKTASNSESENPAIDSPEPKSHAPLTN. The segment at residues 112 to 239 is a cross-link (tryptophyl-tyrosyl-methioninium (Trp-Tyr) (with M-265)); that stretch reads WHAAGTYRIF…FGATTMGLIY (128 aa). Histidine 113 functions as the Proton acceptor in the catalytic mechanism. Residues 239-265 constitute a cross-link (tryptophyl-tyrosyl-methioninium (Tyr-Met) (with W-112)); that stretch reads YVNPEGPEGKPDPLAAAHDIRETFGRM. Residue histidine 280 participates in heme b binding.

It belongs to the peroxidase family. Peroxidase/catalase subfamily. Homodimer or homotetramer. Heme b is required as a cofactor. In terms of processing, formation of the three residue Trp-Tyr-Met cross-link is important for the catalase, but not the peroxidase activity of the enzyme.

It catalyses the reaction H2O2 + AH2 = A + 2 H2O. The enzyme catalyses 2 H2O2 = O2 + 2 H2O. Its function is as follows. Bifunctional enzyme with both catalase and broad-spectrum peroxidase activity. This chain is Catalase-peroxidase, found in Mycolicibacterium gilvum (strain PYR-GCK) (Mycobacterium gilvum (strain PYR-GCK)).